The sequence spans 414 residues: Gamma-glutamyl phosphate reductase (414 aa).

It belongs to the gamma-glutamyl phosphate reductase family.

It is found in the cytoplasm. It carries out the reaction L-glutamate 5-semialdehyde + phosphate + NADP(+) = L-glutamyl 5-phosphate + NADPH + H(+). It functions in the pathway amino-acid biosynthesis; L-proline biosynthesis; L-glutamate 5-semialdehyde from L-glutamate: step 2/2. Functionally, catalyzes the NADPH-dependent reduction of L-glutamate 5-phosphate into L-glutamate 5-semialdehyde and phosphate. The product spontaneously undergoes cyclization to form 1-pyrroline-5-carboxylate. This chain is Gamma-glutamyl phosphate reductase, found in Xanthomonas campestris pv. campestris (strain B100).